Reading from the N-terminus, the 946-residue chain is Zinc finger protein rotund (946 aa).

2 disordered regions span residues 10 to 30 and 156 to 269; these read GPQL…GHSD and FRKP…HNLN. Polar residues predominate over residues 161 to 176; that stretch reads NNNGYSWSTGNNNEVV. Positions 177 to 188 are enriched in low complexity; sequence SHSSNGHTNNHP. Polar residues-rich tracts occupy residues 198–230 and 242–269; these read ASAT…SIKS and TCKS…HNLN. 6 consecutive C2H2-type zinc fingers follow at residues 488–510, 517–539, 545–567, 573–597, 603–625, and 634–656; these read YQCK…TQIH, YKCT…TRIH, YRCE…IRTH, YKCR…SRCH, FKCN…IPKH, and HICQ…MQKH. Positions 683–853 are disordered; that stretch reads GGSANPANGP…TPSAVGPYDA (171 aa). Composition is skewed to low complexity over residues 739–762 and 770–790; these read HQQQ…QQQQ and HGVP…QQQQ. Residues 813-822 show a composition bias toward polar residues; that stretch reads TAPNGSQSNG. The segment covering 828 to 841 has biased composition (basic and acidic residues); that stretch reads QPHHRMPDPVREDI.

It belongs to the krueppel C2H2-type zinc-finger protein family. In terms of assembly, interacts with nab; which acts as a corepressor. As to expression, isoform rn and isoform roe are expressed in non-overlapping domains in the larval imaginal disks. Isoform rn is first expressed during the early third larval instar in the leg, wing, haltere and antennal part of the eye-antennal imaginal disk. It is observed as a ring in the leg and antenna disks and in the presumptive wing pouch and capitellum of wing and haltere disks respectively. In wing disk it is expressed in 3 concentric domains in the wing pouch. In late third instar, expression of isoform rn in the leg disk is no longer evident, but is maintained in the other disks. Isoform roe appears in the third instar and is confined to the eye part of the eye-antennal imaginal disk in a band of 4-6 cells at the morphogenetic furrow. There is no evidence of roe expression in other imaginal disks.

It localises to the nucleus. Functionally, transcription factor involved in imaginal disks development. Isoform rn is required in the wings, antenna, haltere, proboscis and legs disks, while isoform roe is required in the eye disk. Together with nab corepressor, it is involved in the initiation and maintenance of wingless (wg) expression in the wing hinge, by limiting the expression of wg to this compartment. Also required for the epithelial-mesenchymal transition branch of basolateral junctions signaling. In Drosophila melanogaster (Fruit fly), this protein is Zinc finger protein rotund.